The sequence spans 99 residues: Large ribosomal subunit protein eL30 (99 aa).

The protein belongs to the eukaryotic ribosomal protein eL30 family.

The polypeptide is Large ribosomal subunit protein eL30 (Methanobrevibacter smithii (strain ATCC 35061 / DSM 861 / OCM 144 / PS)).